Here is a 575-residue protein sequence, read N- to C-terminus: 2-succinyl-5-enolpyruvyl-6-hydroxy-3-cyclohexene-1-carboxylate synthase (575 aa).

It belongs to the TPP enzyme family. MenD subfamily. Homodimer. Mg(2+) is required as a cofactor. The cofactor is Mn(2+). It depends on thiamine diphosphate as a cofactor.

It catalyses the reaction isochorismate + 2-oxoglutarate + H(+) = 5-enolpyruvoyl-6-hydroxy-2-succinyl-cyclohex-3-ene-1-carboxylate + CO2. It participates in quinol/quinone metabolism; 1,4-dihydroxy-2-naphthoate biosynthesis; 1,4-dihydroxy-2-naphthoate from chorismate: step 2/7. Its pathway is quinol/quinone metabolism; menaquinone biosynthesis. Catalyzes the thiamine diphosphate-dependent decarboxylation of 2-oxoglutarate and the subsequent addition of the resulting succinic semialdehyde-thiamine pyrophosphate anion to isochorismate to yield 2-succinyl-5-enolpyruvyl-6-hydroxy-3-cyclohexene-1-carboxylate (SEPHCHC). The sequence is that of 2-succinyl-5-enolpyruvyl-6-hydroxy-3-cyclohexene-1-carboxylate synthase from Syntrophus aciditrophicus (strain SB).